Consider the following 407-residue polypeptide: Peptidase T (407 aa).

Residue His-78 participates in Zn(2+) binding. Asp-80 is an active-site residue. A Zn(2+)-binding site is contributed by Asp-139. Glu-173 acts as the Proton acceptor in catalysis. Residues Glu-174, Asp-196, and His-378 each contribute to the Zn(2+) site.

This sequence belongs to the peptidase M20B family. The cofactor is Zn(2+).

It localises to the cytoplasm. It catalyses the reaction Release of the N-terminal residue from a tripeptide.. In terms of biological role, cleaves the N-terminal amino acid of tripeptides. The polypeptide is Peptidase T (Macrococcus caseolyticus (strain JCSC5402) (Macrococcoides caseolyticum)).